Reading from the N-terminus, the 247-residue chain is V-type proton ATPase subunit D (247 aa).

This sequence belongs to the V-ATPase D subunit family. In terms of assembly, V-ATPase is a heteromultimeric enzyme made up of two complexes: the ATP-hydrolytic V1 complex and the proton translocation V0 complex. The V1 complex consists of three catalytic AB heterodimers that form a heterohexamer, three peripheral stalks each consisting of EG heterodimers, one central rotor including subunits D and F, and the regulatory subunits C and H. The proton translocation complex V0 consists of the proton transport subunit a, a ring of proteolipid subunits c9c'', rotary subunit d, subunits e and f, and the accessory subunits ATP6AP1/Ac45 and ATP6AP2/PRR. Interacts with SNX10.

It localises to the membrane. The protein resides in the cytoplasmic vesicle. Its subcellular location is the clathrin-coated vesicle membrane. The protein localises to the cytoplasm. It is found in the cytoskeleton. It localises to the microtubule organizing center. The protein resides in the centrosome. Its subcellular location is the cell projection. The protein localises to the cilium. Its function is as follows. Subunit of the V1 complex of vacuolar(H+)-ATPase (V-ATPase), a multisubunit enzyme composed of a peripheral complex (V1) that hydrolyzes ATP and a membrane integral complex (V0) that translocates protons. V-ATPase is responsible for acidifying and maintaining the pH of intracellular compartments and in some cell types, is targeted to the plasma membrane, where it is responsible for acidifying the extracellular environment. May play a role in cilium biogenesis through regulation of the transport and the localization of proteins to the cilium. The chain is V-type proton ATPase subunit D (ATP6V1D) from Homo sapiens (Human).